We begin with the raw amino-acid sequence, 90 residues long: DNA-binding protein HU-alpha (90 aa).

This sequence belongs to the bacterial histone-like protein family. Heterodimer of an alpha and a beta chain.

Its function is as follows. Histone-like DNA-binding protein which is capable of wrapping DNA to stabilize it, and thus to prevent its denaturation under extreme environmental conditions. In Salmonella typhi, this protein is DNA-binding protein HU-alpha (hupA).